The chain runs to 229 residues: Molybdenum transport system permease protein ModB (229 aa).

The Periplasmic segment spans residues 1–16; sequence MILTDPEWQAVLLSLK. Positions 11-219 constitute an ABC transmembrane type-1 domain; that stretch reads VLLSLKVSSL…MISLLISEWL (209 aa). The helical transmembrane segment at 17 to 37 threads the bilayer; that stretch reads VSSLAVLFSLPFGIFFAWLLV. Residues 38-49 lie on the Cytoplasmic side of the membrane; it reads RCTFPGKALLDS. The helical transmembrane segment at 50–70 threads the bilayer; the sequence is VLHLPLVLPPVVVGYLLLVSM. Residues 71 to 83 are Periplasmic-facing; the sequence is GRRGFIGERLYDW. A helical membrane pass occupies residues 84 to 104; that stretch reads FGITFAFSWRGAVLAAAVMSF. At 105–136 the chain is on the cytoplasmic side; that stretch reads PLMVRAIRLALEGVDVKLEQAARTLGAGRWRV. A helical membrane pass occupies residues 137–157; sequence FFTITLPLTLPGIIVGTVLAF. Topologically, residues 158–201 are periplasmic; sequence ARSLGEFGATITFVSNIPGETRTIPSAMYTLIQTPGGESGAARL. A helical transmembrane segment spans residues 202 to 222; sequence CIISIALAMISLLISEWLARI. The Cytoplasmic portion of the chain corresponds to 223–229; sequence SRERAGR.

This sequence belongs to the binding-protein-dependent transport system permease family. CysTW subfamily.

The protein resides in the cell inner membrane. Functionally, part of the binding-protein-dependent transport system for molybdenum; probably responsible for the translocation of the substrate across the membrane. The sequence is that of Molybdenum transport system permease protein ModB (modB) from Escherichia coli O157:H7.